We begin with the raw amino-acid sequence, 438 residues long: tRNA wybutosine-synthesizing protein 2 homolog (438 aa).

Residues serine 209, lysine 216, glutamate 256, and aspartate 284–asparagine 285 each bind S-adenosyl-L-methionine.

It belongs to the class I-like SAM-binding methyltransferase superfamily. TRM5/TYW2 family.

The enzyme catalyses 4-demethylwyosine(37) in tRNA(Phe) + S-adenosyl-L-methionine = 4-demethyl-7-[(3S)-3-amino-3-carboxypropyl]wyosine(37) in tRNA(Phe) + S-methyl-5'-thioadenosine + H(+). It participates in tRNA modification; wybutosine-tRNA(Phe) biosynthesis. Functionally, S-adenosyl-L-methionine-dependent transferase that acts as a component of the wybutosine biosynthesis pathway. Wybutosine is a hyper modified guanosine with a tricyclic base found at the 3'-position adjacent to the anticodon of eukaryotic phenylalanine tRNA. Catalyzes the transfer of the alpha-amino-alpha-carboxypropyl (acp) group from S-adenosyl-L-methionine to the C-7 position of 4-demethylwyosine (imG-14) to produce wybutosine-86. The chain is tRNA wybutosine-synthesizing protein 2 homolog (TRMT12) from Bos taurus (Bovine).